Reading from the N-terminus, the 407-residue chain is [Pyruvate dehydrogenase (acetyl-transferring)] kinase isozyme 2, mitochondrial (407 aa).

The Histidine kinase domain maps to 135-364 (LEYKDTYGDD…DAVIYLKALS (230 aa)). Y215 and Y216 each carry phosphotyrosine. ATP-binding positions include 251 to 258 (ELFKNAMR), D290, 309 to 310 (ST), and 325 to 330 (GFGYGL). K376 carries the N6-succinyllysine modification.

The protein belongs to the PDK/BCKDK protein kinase family. As to quaternary structure, homodimer, and heterodimer with PDK1. Interacts with the pyruvate dehydrogenase complex subunit DLAT, and is part of the multimeric pyruvate dehydrogenase complex that contains multiple copies of pyruvate dehydrogenase (E1), dihydrolipoamide acetyltransferase (DLAT, E2) and lipoamide dehydrogenase (DLD, E3). In terms of tissue distribution, detected in heart (at protein level).

The protein resides in the mitochondrion matrix. It carries out the reaction L-seryl-[pyruvate dehydrogenase E1 alpha subunit] + ATP = O-phospho-L-seryl-[pyruvate dehydrogenase E1 alpha subunit] + ADP + H(+). Functionally, kinase that plays a key role in the regulation of glucose and fatty acid metabolism and homeostasis via phosphorylation of the pyruvate dehydrogenase subunits PDHA1 and PDHA2. This inhibits pyruvate dehydrogenase activity, and thereby regulates metabolite flux through the tricarboxylic acid cycle, down-regulates aerobic respiration and inhibits the formation of acetyl-coenzyme A from pyruvate. Inhibition of pyruvate dehydrogenase decreases glucose utilization and increases fat metabolism. Mediates cellular responses to insulin. Plays an important role in maintaining normal blood glucose levels and in metabolic adaptation to nutrient availability. Via its regulation of pyruvate dehydrogenase activity, plays an important role in maintaining normal blood pH and in preventing the accumulation of ketone bodies under starvation. Plays a role in the regulation of cell proliferation and in resistance to apoptosis under oxidative stress. Plays a role in p53/TP53-mediated apoptosis. This chain is [Pyruvate dehydrogenase (acetyl-transferring)] kinase isozyme 2, mitochondrial (Pdk2), found in Mus musculus (Mouse).